We begin with the raw amino-acid sequence, 1604 residues long: Ubiquitin carboxyl-terminal hydrolase 32 (1604 aa).

EF-hand domains lie at lysine 91–lysine 126, isoleucine 228–glycine 263, and proline 264–valine 299. The Ca(2+) site is built by aspartate 241, asparagine 243, aspartate 245, histidine 247, glutamate 252, aspartate 277, aspartate 279, aspartate 281, and glutamate 288. The DUSP domain occupies alanine 369–isoleucine 585. One can recognise a USP domain in the interval threonine 734–glutamine 1567. The Nucleophile role is filled by cysteine 743. Tyrosine 1173 carries the phosphotyrosine modification. Position 1350 is a phosphoserine (serine 1350). The disordered stretch occupies residues glutamate 1353–glutamate 1432. The span at lysine 1360–threonine 1370 shows a compositional bias: polar residues. The span at serine 1371 to proline 1399 shows a compositional bias: low complexity. Residues serine 1372 and serine 1376 each carry the phosphoserine modification. Residues glycine 1415–lysine 1424 show a composition bias toward polar residues. Serine 1454 is subject to Phosphoserine. Positions serine 1484 to threonine 1504 are disordered. Residues histidine 1491–threonine 1504 are compositionally biased toward basic and acidic residues. Histidine 1526 functions as the Proton acceptor in the catalytic mechanism. The residue at position 1588 (serine 1588) is a Phosphoserine. At cysteine 1601 the chain carries Cysteine methyl ester. Residue cysteine 1601 is the site of S-farnesyl cysteine attachment. Positions valine 1602–glutamine 1604 are cleaved as a propeptide — removed in mature form.

This sequence belongs to the peptidase C19 family.

Its subcellular location is the golgi apparatus membrane. The catalysed reaction is Thiol-dependent hydrolysis of ester, thioester, amide, peptide and isopeptide bonds formed by the C-terminal Gly of ubiquitin (a 76-residue protein attached to proteins as an intracellular targeting signal).. Its function is as follows. Deubiquitinase that can remove conjugated ubiquitin from target proteins, such as RAB7A and LAMTOR1. Acts as a positive regulator of the mTORC1 signaling by mediating deubiquitination of LAMTOR1, thereby promoting the association between LAMTOR1 and the lysosomal V-ATPase complex and subsequent activation of the mTORC1 complex. The sequence is that of Ubiquitin carboxyl-terminal hydrolase 32 from Mus musculus (Mouse).